The chain runs to 85 residues: uncharacterized protein (85 aa).

The interval 44 to 85 (EAHPSEHNGTVPRSLSQEWAKILAEEAEENSEENNDESEEDN) is disordered. Positions 50–60 (HNGTVPRSLSQ) are enriched in polar residues. Residues 68–85 (EEAEENSEENNDESEEDN) show a composition bias toward acidic residues.

This is an uncharacterized protein from Haloarcula hispanica (His1V).